Reading from the N-terminus, the 354-residue chain is Squamosa promoter-binding-like protein 15 (354 aa).

Residues 1–25 are disordered; it reads MELLMCSGQAESGGSSSTESSSLSG. The segment covering 7–25 has biased composition (low complexity); the sequence is SGQAESGGSSSTESSSLSG. The segment at 56 to 133 adopts an SBP-type zinc-finger fold; it reads TARCQVEGCR…ACHNERRRKP (78 aa). Positions 59, 64, 81, 84, 100, 103, 107, and 119 each coordinate Zn(2+). Residues 116–132 carry the Bipartite nuclear localization signal motif; the sequence is KRSCRRRLACHNERRRK.

Zn(2+) is required as a cofactor.

It localises to the nucleus. Trans-acting factor that binds specifically to the consensus nucleotide sequence 5'-TNCGTACAA-3'. In Arabidopsis thaliana (Mouse-ear cress), this protein is Squamosa promoter-binding-like protein 15 (SPL15).